A 315-amino-acid polypeptide reads, in one-letter code: Cobalamin biosynthesis protein CobD (315 aa).

Transmembrane regions (helical) follow at residues 48–68, 77–97, 150–170, 200–220, and 295–315; these read IAGF…TLGI, PILG…AKGL, DGII…AFLY, VFNY…SFIL, and MVSF…EVII.

Belongs to the CobD/CbiB family.

The protein localises to the cell membrane. It participates in cofactor biosynthesis; adenosylcobalamin biosynthesis. Converts cobyric acid to cobinamide by the addition of aminopropanol on the F carboxylic group. The sequence is that of Cobalamin biosynthesis protein CobD from Clostridium perfringens (strain 13 / Type A).